The sequence spans 331 residues: Protein FLX-like 1 (331 aa).

Residues 1-51 (MSGRNRGPPPPSMKGGSYSGLQAPVHQPPFVRGLGGGPVPPPPHPSMIDDS) form a disordered region. A coiled-coil region spans residues 69-252 (ILEDRLAAQN…AEIANSETSA (184 aa)). Low complexity predominate over residues 306–321 (QAAWAGGYDPQQQQQQ). The tract at residues 306 to 331 (QAAWAGGYDPQQQQQQQPPPQGQGHR) is disordered. Pro residues predominate over residues 322–331 (QPPPQGQGHR).

The protein belongs to the FLX family. As to quaternary structure, interacts with FRI.

In terms of biological role, has no transcriptional activation activity. This Arabidopsis thaliana (Mouse-ear cress) protein is Protein FLX-like 1 (FLXL1).